Reading from the N-terminus, the 157-residue chain is SsrA-binding protein (157 aa).

It belongs to the SmpB family.

It localises to the cytoplasm. Functionally, required for rescue of stalled ribosomes mediated by trans-translation. Binds to transfer-messenger RNA (tmRNA), required for stable association of tmRNA with ribosomes. tmRNA and SmpB together mimic tRNA shape, replacing the anticodon stem-loop with SmpB. tmRNA is encoded by the ssrA gene; the 2 termini fold to resemble tRNA(Ala) and it encodes a 'tag peptide', a short internal open reading frame. During trans-translation Ala-aminoacylated tmRNA acts like a tRNA, entering the A-site of stalled ribosomes, displacing the stalled mRNA. The ribosome then switches to translate the ORF on the tmRNA; the nascent peptide is terminated with the 'tag peptide' encoded by the tmRNA and targeted for degradation. The ribosome is freed to recommence translation, which seems to be the essential function of trans-translation. This chain is SsrA-binding protein, found in Limosilactobacillus fermentum (strain NBRC 3956 / LMG 18251) (Lactobacillus fermentum).